Here is a 685-residue protein sequence, read N- to C-terminus: MKFIALISGGKDSFYNIFHCLKNNHELIALGNIYPKESEEQELDSFMFQTVGHDLIDYYSKCIGVPLFRRSILRNTSNNVELNYTATQDDEIEELFELLRTVKDKIPDLEAVSVGAILSSYQRTRVENVCSRLGLVVLSYLWQRDQAELMGEMCLMSKDVNNVENDTNSGNKFDARIIKVAAIGLNEKHLGMSLPMMQPVLQKLNQLYQVHICGEGGEFETMVLDAPFFQHGYLELIDIVKCSDGEVHNARLKVKFQPRNLSKSFLLNQLDQLPVPSIFGNNWQDLTQNLPKQQAKTGEQRFENHMSNALPQTTINKTNDKLYISNLQSRKSETVEKQSEDIFTELADILHSNQIPRNHILSASLLIRDMSNFGKINKIYNEFLDLSKYGPLPPSRACVGSKCLPEDCHVQLSVVVDVKNTGKEKINKNKGGLHVQGRSYWAPCNIGPYSQSTWLNDDANQVSFISGQIGLVPQSMEILGTPLTDQIVLALQHFDTLCETIGAQEKLLMTCYISDESVLDSVIKTWAFYCSNMNHRSDLWMDKSDDVEKCLVLVKISELPRGAVAEFGGVTCKRLIVDDNDSDKKEREENDDVSTVFQKLNLNIEGFHNTTVSAFGYNRNFITGFVDSREELELILEKTPKSAQITLYYNPKEIITFHHHIGYYPVEKLFDYRGKEHRFGLHIRS.

It in the C-terminal section; belongs to the RutC family. The protein in the N-terminal section; belongs to the Diphthine--ammonia ligase family. Interacts with elongation factor 2 (eEF-2; EFT1 or EFT2).

It localises to the cytoplasm. It catalyses the reaction diphthine-[translation elongation factor 2] + NH4(+) + ATP = diphthamide-[translation elongation factor 2] + AMP + diphosphate + H(+). It functions in the pathway protein modification; peptidyl-diphthamide biosynthesis. Functionally, amidase that catalyzes the last step of diphthamide biosynthesis using ammonium and ATP. Diphthamide biosynthesis consists in the conversion of an L-histidine residue in the translation elongation factor eEF-2 (EFT1 or EFT2) to diphthamide. The polypeptide is Diphthine--ammonia ligase (DPH6) (Saccharomyces cerevisiae (strain ATCC 204508 / S288c) (Baker's yeast)).